The primary structure comprises 95 residues: Aspartyl/glutamyl-tRNA(Asn/Gln) amidotransferase subunit C (95 aa).

It belongs to the GatC family. As to quaternary structure, heterotrimer of A, B and C subunits.

It carries out the reaction L-glutamyl-tRNA(Gln) + L-glutamine + ATP + H2O = L-glutaminyl-tRNA(Gln) + L-glutamate + ADP + phosphate + H(+). The enzyme catalyses L-aspartyl-tRNA(Asn) + L-glutamine + ATP + H2O = L-asparaginyl-tRNA(Asn) + L-glutamate + ADP + phosphate + 2 H(+). Allows the formation of correctly charged Asn-tRNA(Asn) or Gln-tRNA(Gln) through the transamidation of misacylated Asp-tRNA(Asn) or Glu-tRNA(Gln) in organisms which lack either or both of asparaginyl-tRNA or glutaminyl-tRNA synthetases. The reaction takes place in the presence of glutamine and ATP through an activated phospho-Asp-tRNA(Asn) or phospho-Glu-tRNA(Gln). The protein is Aspartyl/glutamyl-tRNA(Asn/Gln) amidotransferase subunit C of Azoarcus sp. (strain BH72).